Here is a 297-residue protein sequence, read N- to C-terminus: ATP phosphoribosyltransferase (297 aa).

Met-1 carries the post-translational modification N-acetylmethionine.

It belongs to the ATP phosphoribosyltransferase family.

The protein resides in the cytoplasm. It carries out the reaction 1-(5-phospho-beta-D-ribosyl)-ATP + diphosphate = 5-phospho-alpha-D-ribose 1-diphosphate + ATP. It functions in the pathway amino-acid biosynthesis; L-histidine biosynthesis; L-histidine from 5-phospho-alpha-D-ribose 1-diphosphate: step 1/9. Its function is as follows. Catalyzes the condensation of ATP and 5-phosphoribose 1-diphosphate to form N'-(5'-phosphoribosyl)-ATP (PR-ATP). Has a crucial role in the pathway because the rate of histidine biosynthesis seems to be controlled primarily by regulation of the enzymatic activity. The protein is ATP phosphoribosyltransferase (HIS1) of Saccharomyces cerevisiae (strain ATCC 204508 / S288c) (Baker's yeast).